Reading from the N-terminus, the 889-residue chain is Chitin synthase I (889 aa).

Asn43 carries an N-linked (GlcNAc...) asparagine glycan. A disordered region spans residues 94–138 (GEYFDGYNQGHPPQEHQAYDDDGQPLIEDQHGYSDNPQHQTQTPA). The span at 126 to 137 (YSDNPQHQTQTP) shows a compositional bias: polar residues. N-linked (GlcNAc...) asparagine glycosylation is present at Asn199. Helical transmembrane passes span 431 to 451 (SAFGFISVLPGAFSAYRYVAL), 530 to 550 (RWLNGSFFAAIYAIAHFYEFF), 560 to 580 (LAFFVEFVFNTINMIFAWFAI), 606 to 626 (ILGVVFTWLYGVFLMTCFVLS), 641 to 661 (MVWFWAIIMIYLMFAAIFIAV), 687 to 707 (TLIISVMSTFGIWLIASIIMF), 716 to 736 (FIQYMLLTPTYTNVLNVYAFC), 815 to 835 (GVVLIWMITNFALAALVLSSA), and 861 to 881 (IVLWSVAVLSGFKFLGAMWFL).

Belongs to the chitin synthase family. Class I subfamily. As to expression, expressed in hyphal bodies.

The protein localises to the cell membrane. The enzyme catalyses [(1-&gt;4)-N-acetyl-beta-D-glucosaminyl](n) + UDP-N-acetyl-alpha-D-glucosamine = [(1-&gt;4)-N-acetyl-beta-D-glucosaminyl](n+1) + UDP + H(+). Polymerizes chitin, a structural polymer of the cell wall and septum, by transferring the sugar moiety of UDP-GlcNAc to the non-reducing end of the growing chitin polymer. Contributes to the production of conidia and the ability of fungal conidia to germinate. Not involved in fungal stress tolerances. The polypeptide is Chitin synthase I (Metarhizium acridum (strain CQMa 102)).